Consider the following 431-residue polypeptide: Glutamate-1-semialdehyde 2,1-aminomutase (431 aa).

An N6-(pyridoxal phosphate)lysine modification is found at Lys269.

Belongs to the class-III pyridoxal-phosphate-dependent aminotransferase family. HemL subfamily. In terms of assembly, homodimer. Pyridoxal 5'-phosphate serves as cofactor.

It is found in the cytoplasm. The enzyme catalyses (S)-4-amino-5-oxopentanoate = 5-aminolevulinate. Its pathway is porphyrin-containing compound metabolism; protoporphyrin-IX biosynthesis; 5-aminolevulinate from L-glutamyl-tRNA(Glu): step 2/2. The polypeptide is Glutamate-1-semialdehyde 2,1-aminomutase (Francisella tularensis subsp. holarctica (strain FTNF002-00 / FTA)).